Consider the following 116-residue polypeptide: Dynein light chain Tctex-type 3 (116 aa).

Residue tyrosine 4 is modified to 3'-nitrotyrosine.

It belongs to the dynein light chain Tctex-type family. In terms of assembly, homodimer. The cytoplasmic dynein 1 complex consists of two catalytic heavy chains (HCs) and a number of non-catalytic subunits presented by intermediate chains (ICs), light intermediate chains (LICs) and light chains (LCs); the composition seems to vary in respect to the IC, LIC and LC composition. The heavy chain homodimer serves as a scaffold for the probable homodimeric assembly of the respective non-catalytic subunits. The ICs and LICs bind directly to the HC dimer and the LCs assemble on the IC dimer. DYNLT1 and DYNLT3 compete for association with dynein IC (DYNC1I1 or DYNC1I2). Self-associates. Interacts with DYNC1I1 and DYNC1I2. Interacts with BUB3. Interacts with SATB1 in nucleus to form complex with matrix attachment regions (MARs) of DNA.

It is found in the nucleus. The protein localises to the cytoplasm. It localises to the cytoskeleton. The protein resides in the chromosome. Its subcellular location is the centromere. It is found in the kinetochore. Functionally, acts as one of several non-catalytic accessory components of the cytoplasmic dynein 1 complex that are thought to be involved in linking dynein to cargos and to adapter proteins that regulate dynein function. Cytoplasmic dynein 1 acts as a motor for the intracellular retrograde motility of vesicles and organelles along microtubules. Probably binds BUB3 as part of transport cargo. Required for the efficient progression through mitosis. The chain is Dynein light chain Tctex-type 3 (DYNLT3) from Homo sapiens (Human).